A 193-amino-acid polypeptide reads, in one-letter code: Protein SPEAR3 (193 aa).

2 disordered regions span residues 1 to 50 (MGSS…GVAQ) and 85 to 104 (GYPS…SSPP). Positions 14–26 (SSSSSPTSSSSSP) are enriched in low complexity. The short motif at 44 to 52 (RGLGVAQLE) is the SPL element. Low complexity predominate over residues 86–101 (YPSIPSSSPSFSYASS). An EAR motif is present at residues 187–193 (LDLELRL).

As to quaternary structure, interacts with TPL and the TPR corepressors TPR1, TPR2, TPR3, TPR4, and with the TCP transcription factors TCP2, TCP3, TCP4, TCP5, TCP10, TCP13, TCP17 and TCP24. Interacts with SPL and SPEAR2. Expressed in shoot apical meristem, cotyledons and leaves. Detected at the leaf margins and in the vascular bundles at the base of the leaves.

It localises to the nucleus. Transcriptional regulator of leaf development. Acts as an adapter-like transcriptional repressor recruiting TPL/TPR corepressors to inhibit the CIN-like TCP transcription factors. This chain is Protein SPEAR3, found in Arabidopsis thaliana (Mouse-ear cress).